A 448-amino-acid chain; its full sequence is Phosphoglucosamine mutase (448 aa).

Serine 100 acts as the Phosphoserine intermediate in catalysis. Mg(2+) contacts are provided by serine 100, aspartate 240, aspartate 242, and aspartate 244. Phosphoserine is present on serine 100.

This sequence belongs to the phosphohexose mutase family. Mg(2+) serves as cofactor. In terms of processing, activated by phosphorylation.

It catalyses the reaction alpha-D-glucosamine 1-phosphate = D-glucosamine 6-phosphate. Catalyzes the conversion of glucosamine-6-phosphate to glucosamine-1-phosphate. The sequence is that of Phosphoglucosamine mutase from Bacillus licheniformis (strain ATCC 14580 / DSM 13 / JCM 2505 / CCUG 7422 / NBRC 12200 / NCIMB 9375 / NCTC 10341 / NRRL NRS-1264 / Gibson 46).